The primary structure comprises 448 residues: Damage-control phosphatase ARMT1 (448 aa).

Asp-257 and Asn-258 together coordinate Mn(2+). Residue 257-258 (DN) participates in substrate binding. S-adenosyl-L-methionine-binding residues include Glu-262 and Asp-295. Asp-295 serves as a coordination point for Mn(2+). Residues 371–375 (DLNYR) and Lys-408 each bind substrate. Residues 405–408 (RTLK) carry the Subfamily III RTxK motif motif.

This sequence belongs to the damage-control phosphatase family. Sugar phosphate phosphatase III subfamily. It depends on Mn(2+) as a cofactor. Ni(2+) serves as cofactor. Post-translationally, automethylated.

It carries out the reaction beta-D-fructose 1-phosphate + H2O = D-fructose + phosphate. The enzyme catalyses beta-D-fructose 6-phosphate = dihydroxyacetone + D-glyceraldehyde 3-phosphate. The catalysed reaction is L-glutamyl-[protein] + S-adenosyl-L-methionine = [protein]-L-glutamate 5-O-methyl ester + S-adenosyl-L-homocysteine. Metal-dependent phosphatase that shows phosphatase activity against several substrates, including fructose-1-phosphate and fructose-6-phosphate. Its preference for fructose-1-phosphate, a strong glycating agent that causes DNA damage rather than a canonical yeast metabolite, suggests a damage-control function in hexose phosphate metabolism. Has also been shown to have O-methyltransferase activity that methylates glutamate residues of target proteins to form gamma-glutamyl methyl ester residues. Possibly methylates PCNA, suggesting it is involved in the DNA damage response. The protein is Damage-control phosphatase ARMT1 of Danio rerio (Zebrafish).